Here is a 436-residue protein sequence, read N- to C-terminus: UDP-N-acetylglucosamine 1-carboxyvinyltransferase 1 (436 aa).

22 to 23 (KN) contacts phosphoenolpyruvate. Position 93 (Arg93) interacts with UDP-N-acetyl-alpha-D-glucosamine. Cys117 (proton donor) is an active-site residue. Position 117 is a 2-(S-cysteinyl)pyruvic acid O-phosphothioketal (Cys117). Residues 122–126 (RPIDQ), Asp306, and Val328 contribute to the UDP-N-acetyl-alpha-D-glucosamine site.

Belongs to the EPSP synthase family. MurA subfamily.

The protein localises to the cytoplasm. The catalysed reaction is phosphoenolpyruvate + UDP-N-acetyl-alpha-D-glucosamine = UDP-N-acetyl-3-O-(1-carboxyvinyl)-alpha-D-glucosamine + phosphate. Its pathway is cell wall biogenesis; peptidoglycan biosynthesis. In terms of biological role, cell wall formation. Adds enolpyruvyl to UDP-N-acetylglucosamine. This is UDP-N-acetylglucosamine 1-carboxyvinyltransferase 1 from Bacillus licheniformis (strain ATCC 14580 / DSM 13 / JCM 2505 / CCUG 7422 / NBRC 12200 / NCIMB 9375 / NCTC 10341 / NRRL NRS-1264 / Gibson 46).